Reading from the N-terminus, the 376-residue chain is Succinyl-diaminopimelate desuccinylase (376 aa).

His-66 contributes to the Zn(2+) binding site. Residue Asp-68 is part of the active site. Asp-99 contacts Zn(2+). The Proton acceptor role is filled by Glu-133. Residues Glu-134, Glu-162, and His-348 each contribute to the Zn(2+) site.

This sequence belongs to the peptidase M20A family. DapE subfamily. As to quaternary structure, homodimer. Zn(2+) serves as cofactor. The cofactor is Co(2+).

It catalyses the reaction N-succinyl-(2S,6S)-2,6-diaminopimelate + H2O = (2S,6S)-2,6-diaminopimelate + succinate. It participates in amino-acid biosynthesis; L-lysine biosynthesis via DAP pathway; LL-2,6-diaminopimelate from (S)-tetrahydrodipicolinate (succinylase route): step 3/3. In terms of biological role, catalyzes the hydrolysis of N-succinyl-L,L-diaminopimelic acid (SDAP), forming succinate and LL-2,6-diaminopimelate (DAP), an intermediate involved in the bacterial biosynthesis of lysine and meso-diaminopimelic acid, an essential component of bacterial cell walls. This chain is Succinyl-diaminopimelate desuccinylase, found in Nitrosococcus oceani (strain ATCC 19707 / BCRC 17464 / JCM 30415 / NCIMB 11848 / C-107).